Consider the following 449-residue polypeptide: Putative methylthiotransferase MJ0865 (449 aa).

The Radical SAM core domain maps to 163–390 (SIRGANVYIE…EGEYRKLGLS (228 aa)). 3 residues coordinate [4Fe-4S] cluster: Cys-177, Cys-181, and Cys-184.

The protein belongs to the methylthiotransferase family. Requires [4Fe-4S] cluster as cofactor.

This chain is Putative methylthiotransferase MJ0865, found in Methanocaldococcus jannaschii (strain ATCC 43067 / DSM 2661 / JAL-1 / JCM 10045 / NBRC 100440) (Methanococcus jannaschii).